Consider the following 1240-residue polypeptide: DNA polymerase II large subunit (1240 aa).

The protein belongs to the archaeal DNA polymerase II family. Heterodimer of a large subunit and a small subunit.

The enzyme catalyses DNA(n) + a 2'-deoxyribonucleoside 5'-triphosphate = DNA(n+1) + diphosphate. It carries out the reaction Exonucleolytic cleavage in the 3'- to 5'-direction to yield nucleoside 5'-phosphates.. Its function is as follows. Possesses two activities: a DNA synthesis (polymerase) and an exonucleolytic activity that degrades single-stranded DNA in the 3'- to 5'-direction. Has a template-primer preference which is characteristic of a replicative DNA polymerase. The polypeptide is DNA polymerase II large subunit (Methanopyrus kandleri (strain AV19 / DSM 6324 / JCM 9639 / NBRC 100938)).